A 326-amino-acid chain; its full sequence is Pyruvate dehydrogenase E1 component subunit alpha (326 aa).

In terms of assembly, heterodimer of an alpha and a beta chain. It depends on thiamine diphosphate as a cofactor.

The enzyme catalyses N(6)-[(R)-lipoyl]-L-lysyl-[protein] + pyruvate + H(+) = N(6)-[(R)-S(8)-acetyldihydrolipoyl]-L-lysyl-[protein] + CO2. Its function is as follows. The pyruvate dehydrogenase complex catalyzes the overall conversion of pyruvate to acetyl-CoA and CO(2). It contains multiple copies of three enzymatic components: pyruvate dehydrogenase (E1), dihydrolipoamide acetyltransferase (E2) and lipoamide dehydrogenase (E3). In Rickettsia bellii (strain RML369-C), this protein is Pyruvate dehydrogenase E1 component subunit alpha (pdhA).